Consider the following 641-residue polypeptide: Chaperone protein DnaK (641 aa).

T200 bears the Phosphothreonine; by autocatalysis mark. Residues 602 to 611 (AASSKASAAS) are compositionally biased toward low complexity. Residues 602–641 (AASSKASAASSPPPPPGAGGQKSDVIDAEFEKVDKDKPQA) are disordered. The span at 630 to 641 (EFEKVDKDKPQA) shows a compositional bias: basic and acidic residues.

Belongs to the heat shock protein 70 family.

Its function is as follows. Acts as a chaperone. This is Chaperone protein DnaK from Methylacidiphilum infernorum (isolate V4) (Methylokorus infernorum (strain V4)).